The sequence spans 287 residues: Acetyl-coenzyme A carboxylase carboxyl transferase subunit beta (287 aa).

The region spanning 25–287 is the CoA carboxyltransferase N-terminal domain; the sequence is VWTKCSACEQ…KMLNTHVIEE (263 aa). Zn(2+) contacts are provided by cysteine 29, cysteine 32, cysteine 48, and cysteine 51. A C4-type zinc finger spans residues 29–51; it reads CSACEQVLYRAELERNLEVCPKC.

Belongs to the AccD/PCCB family. As to quaternary structure, acetyl-CoA carboxylase is a heterohexamer composed of biotin carboxyl carrier protein (AccB), biotin carboxylase (AccC) and two subunits each of ACCase subunit alpha (AccA) and ACCase subunit beta (AccD). Requires Zn(2+) as cofactor.

It localises to the cytoplasm. The catalysed reaction is N(6)-carboxybiotinyl-L-lysyl-[protein] + acetyl-CoA = N(6)-biotinyl-L-lysyl-[protein] + malonyl-CoA. It functions in the pathway lipid metabolism; malonyl-CoA biosynthesis; malonyl-CoA from acetyl-CoA: step 1/1. Functionally, component of the acetyl coenzyme A carboxylase (ACC) complex. Biotin carboxylase (BC) catalyzes the carboxylation of biotin on its carrier protein (BCCP) and then the CO(2) group is transferred by the transcarboxylase to acetyl-CoA to form malonyl-CoA. The protein is Acetyl-coenzyme A carboxylase carboxyl transferase subunit beta of Aeromonas hydrophila subsp. hydrophila (strain ATCC 7966 / DSM 30187 / BCRC 13018 / CCUG 14551 / JCM 1027 / KCTC 2358 / NCIMB 9240 / NCTC 8049).